Here is a 750-residue protein sequence, read N- to C-terminus: Photosystem I P700 chlorophyll a apoprotein A1 (750 aa).

The next 8 membrane-spanning stretches (helical) occupy residues 70–93, 156–179, 195–219, 291–309, 346–369, 385–411, 433–455, and 531–549; these read VFSAHFGQLSIIFLWLSGMYFHGA, LYCTAIGALVFAALMLFAGWFHYH, LNHHLAGLLGLGSLSWAGHQVHVSL, IAHHHLAIAILFLIAGHMY, WHAQLSLNLAMLGSSTIVVAHHMY, LSLFTHHMWIGGFLIVGAAAHAAIFMV, AIISHLNWACIFLGFHSFGLYIH, and FLVHHIHAFTIHVTVLILL. Residues Cys-573 and Cys-582 each coordinate [4Fe-4S] cluster. Transmembrane regions (helical) follow at residues 589–610 and 664–686; these read HVFLGLFWMYNAISVVIFHFSW and LSAYGLFFLGAHFVWAFSLMFLF. His-675 serves as a coordination point for chlorophyll a'. Positions 683 and 691 each coordinate chlorophyll a. Trp-692 lines the phylloquinone pocket. A helical transmembrane segment spans residues 724–744; the sequence is AVGVTHYLLGGIATTWAFFLA.

It belongs to the PsaA/PsaB family. The PsaA/B heterodimer binds the P700 chlorophyll special pair and subsequent electron acceptors. PSI consists of a core antenna complex that captures photons, and an electron transfer chain that converts photonic excitation into a charge separation. The eukaryotic PSI reaction center is composed of at least 11 subunits. P700 is a chlorophyll a/chlorophyll a' dimer, A0 is one or more chlorophyll a, A1 is one or both phylloquinones and FX is a shared 4Fe-4S iron-sulfur center. serves as cofactor.

It localises to the plastid. The protein localises to the chloroplast thylakoid membrane. It catalyses the reaction reduced [plastocyanin] + hnu + oxidized [2Fe-2S]-[ferredoxin] = oxidized [plastocyanin] + reduced [2Fe-2S]-[ferredoxin]. Its function is as follows. PsaA and PsaB bind P700, the primary electron donor of photosystem I (PSI), as well as the electron acceptors A0, A1 and FX. PSI is a plastocyanin-ferredoxin oxidoreductase, converting photonic excitation into a charge separation, which transfers an electron from the donor P700 chlorophyll pair to the spectroscopically characterized acceptors A0, A1, FX, FA and FB in turn. Oxidized P700 is reduced on the lumenal side of the thylakoid membrane by plastocyanin. The polypeptide is Photosystem I P700 chlorophyll a apoprotein A1 (Liriodendron tulipifera (Tuliptree)).